The following is a 98-amino-acid chain: NADH-ubiquinone oxidoreductase chain 4L (98 aa).

The next 3 membrane-spanning stretches (helical) occupy residues 1–21 (MPSISTNIILAFTTALLGTLI), 26–46 (LMSSLLCLEGMMLSMFILTSL), and 61–81 (IILLVFAACEAAIGLALLVMV).

This sequence belongs to the complex I subunit 4L family. As to quaternary structure, core subunit of respiratory chain NADH dehydrogenase (Complex I) which is composed of 45 different subunits.

It is found in the mitochondrion inner membrane. The catalysed reaction is a ubiquinone + NADH + 5 H(+)(in) = a ubiquinol + NAD(+) + 4 H(+)(out). Functionally, core subunit of the mitochondrial membrane respiratory chain NADH dehydrogenase (Complex I) which catalyzes electron transfer from NADH through the respiratory chain, using ubiquinone as an electron acceptor. Part of the enzyme membrane arm which is embedded in the lipid bilayer and involved in proton translocation. This chain is NADH-ubiquinone oxidoreductase chain 4L (MT-ND4L), found in Otolemur crassicaudatus (Brown greater galago).